The following is a 329-amino-acid chain: Malate dehydrogenase (329 aa).

12–18 lines the NAD(+) pocket; that stretch reads GAAGQIG. The substrate site is built by Arg93 and Arg99. Residues Asn106, Gln113, and 130–132 contribute to the NAD(+) site; that span reads TGN. Residues Asn132 and Arg163 each contribute to the substrate site. His188 functions as the Proton acceptor in the catalytic mechanism.

Belongs to the LDH/MDH superfamily. MDH type 2 family.

It carries out the reaction (S)-malate + NAD(+) = oxaloacetate + NADH + H(+). In terms of biological role, catalyzes the reversible oxidation of malate to oxaloacetate. The chain is Malate dehydrogenase from Mycobacterium ulcerans (strain Agy99).